Consider the following 747-residue polypeptide: Myotubularin-related protein 12 (747 aa).

A Myotubularin phosphatase domain is found at 205–643 (FDTLKDWCWE…PEIKVWAQRY (439 aa)). Positions 449–558 (VPVFLLFLDC…KGQRKGMRFK (110 aa)) are interaction with MTM1. Phosphoserine occurs at positions 564, 601, and 716.

The protein belongs to the protein-tyrosine phosphatase family. Non-receptor class myotubularin subfamily. In terms of assembly, heterodimer with lipid phosphatase MTM1. Heterodimer with lipid phosphatase MTMR2. In terms of tissue distribution, expressed in skeletal muscles (at protein level). Ubiquitous with prominent expression in brain, heart, kidney, placenta, and lung.

The protein localises to the cytoplasm. The protein resides in the sarcoplasmic reticulum. Its subcellular location is the myofibril. It is found in the sarcomere. Functionally, acts as an adapter for the myotubularin-related phosphatases. Regulates phosphatase MTM1 protein stability and possibly its intracellular location. By stabilizing MTM1 protein levels, required for skeletal muscle maintenance but not for myogenesis. This Homo sapiens (Human) protein is Myotubularin-related protein 12 (MTMR12).